The chain runs to 342 residues: Central glycolytic genes regulator (342 aa).

The segment at residues 37–56 (RRNLAVSLGLTERVLRSEVT) is a DNA-binding region (H-T-H motif).

This sequence belongs to the SorC transcriptional regulatory family. In terms of assembly, homotetramer.

Its function is as follows. In the absence of glucose, represses the transcription of the gapA operon, which encodes five key glycolytic enzymes. In Priestia megaterium (strain DSM 319 / IMG 1521) (Bacillus megaterium), this protein is Central glycolytic genes regulator (cggR).